Reading from the N-terminus, the 92-residue chain is Small ribosomal subunit protein uS19 (92 aa).

It belongs to the universal ribosomal protein uS19 family.

Functionally, protein S19 forms a complex with S13 that binds strongly to the 16S ribosomal RNA. This chain is Small ribosomal subunit protein uS19, found in Picosynechococcus sp. (strain ATCC 27264 / PCC 7002 / PR-6) (Agmenellum quadruplicatum).